The primary structure comprises 152 residues: Deoxyuridine 5'-triphosphate nucleotidohydrolase (152 aa).

Substrate is bound by residues 71–73 (RSG), asparagine 84, 88–90 (LID), and methionine 98.

The protein belongs to the dUTPase family. It depends on Mg(2+) as a cofactor.

The catalysed reaction is dUTP + H2O = dUMP + diphosphate + H(+). It participates in pyrimidine metabolism; dUMP biosynthesis; dUMP from dCTP (dUTP route): step 2/2. This enzyme is involved in nucleotide metabolism: it produces dUMP, the immediate precursor of thymidine nucleotides and it decreases the intracellular concentration of dUTP so that uracil cannot be incorporated into DNA. In Shewanella amazonensis (strain ATCC BAA-1098 / SB2B), this protein is Deoxyuridine 5'-triphosphate nucleotidohydrolase.